Reading from the N-terminus, the 409-residue chain is L-cysteine:1D-myo-inositol 2-amino-2-deoxy-alpha-D-glucopyranoside ligase (409 aa).

Cysteine 43 contributes to the Zn(2+) binding site. L-cysteinyl-5'-AMP-binding positions include 43 to 46, threonine 58, and 81 to 83; these read CGIT and NVT. Residues 45–55 carry the 'HIGH' region motif; it reads ITPYDATHMGH. A 'ERGGDP' region motif is present at residues 183-188; it reads ERGGDP. L-cysteinyl-5'-AMP is bound at residue tryptophan 224. Cysteine 228 contributes to the Zn(2+) binding site. 246 to 248 lines the L-cysteinyl-5'-AMP pocket; it reads GSD. Histidine 253 is a binding site for Zn(2+). Residue valine 280 participates in L-cysteinyl-5'-AMP binding. Positions 286–290 match the 'KMSKS' region motif; that stretch reads KMSKS.

Belongs to the class-I aminoacyl-tRNA synthetase family. MshC subfamily. Monomer. Requires Zn(2+) as cofactor.

The enzyme catalyses 1D-myo-inositol 2-amino-2-deoxy-alpha-D-glucopyranoside + L-cysteine + ATP = 1D-myo-inositol 2-(L-cysteinylamino)-2-deoxy-alpha-D-glucopyranoside + AMP + diphosphate + H(+). Catalyzes the ATP-dependent condensation of GlcN-Ins and L-cysteine to form L-Cys-GlcN-Ins. In Streptomyces avermitilis (strain ATCC 31267 / DSM 46492 / JCM 5070 / NBRC 14893 / NCIMB 12804 / NRRL 8165 / MA-4680), this protein is L-cysteine:1D-myo-inositol 2-amino-2-deoxy-alpha-D-glucopyranoside ligase (mshC).